Here is a 485-residue protein sequence, read N- to C-terminus: Adenosylhomocysteinase (485 aa).

The substrate site is built by Thr-64, Asp-139, and Glu-205. Residue 206 to 208 (TTT) coordinates NAD(+). Residues Lys-235 and Asp-239 each coordinate substrate. Residues Asn-240, 269-274 (GYGDVG), Glu-292, Asn-327, 348-350 (IGH), and Asn-397 contribute to the NAD(+) site.

The protein belongs to the adenosylhomocysteinase family. It depends on NAD(+) as a cofactor.

The enzyme catalyses S-adenosyl-L-homocysteine + H2O = L-homocysteine + adenosine. It participates in amino-acid biosynthesis; L-homocysteine biosynthesis; L-homocysteine from S-adenosyl-L-homocysteine: step 1/1. Adenosylhomocysteine is a competitive inhibitor of S-adenosyl-L-methionine-dependent methyl transferase reactions; therefore adenosylhomocysteinase may play a key role in the control of methylations via regulation of the intracellular concentration of adenosylhomocysteine. In Solanum lycopersicum (Tomato), this protein is Adenosylhomocysteinase (SAHH).